The primary structure comprises 906 residues: Patched domain-containing protein 3 (906 aa).

A disordered region spans residues 1 to 70; it reads MISSKVAPGE…LGQEAPPPRR (70 aa). N-linked (GlcNAc...) asparagine glycosylation is found at asparagine 148 and asparagine 235. 11 consecutive transmembrane segments (helical) span residues 338 to 358, 370 to 390, 392 to 412, 442 to 462, 476 to 496, 559 to 579, 760 to 780, 782 to 802, 814 to 834, 848 to 868, and 883 to 903; these read TVIP…VVSC, VAVF…GLML, LGVP…GVGV, VAVS…TGIT, GTTL…VMAL, FIVV…CFQV, VMIA…HPVC, LWVT…MAFW, LVIC…AFVS, LYLL…GVCV, and IMFL…PVFL. Residues 339–496 form the SSD domain; sequence VIPLFHLAYI…ITCFGAVMAL (158 aa).

The protein belongs to the patched family. As to expression, expressed in germ cells of the testis (at protein level).

It localises to the cell projection. Its subcellular location is the cilium. The protein localises to the flagellum membrane. It is found in the endoplasmic reticulum membrane. In terms of biological role, may play a role in sperm development or sperm function. However, does not appear to have an essential role in spermatogenesis or male fertility. This is Patched domain-containing protein 3 (Ptchd3) from Mus musculus (Mouse).